Here is a 359-residue protein sequence, read N- to C-terminus: Mitochondrial glutathione transporter SLC25A39 (359 aa).

Residues 1 to 18 (MGDRPAVRISAAITPVQQ) are Mitochondrial intermembrane-facing. Solcar repeat units follow at residues 13–149 (ITPV…LRDF), 157–241 (HGDH…VKAQ), and 251–346 (ASFT…GKTF). Residues 19-39 (MLASGTGAVLTSLFVTPLDVV) traverse the membrane as a helical segment. Residues 40-119 (KIRLQAQQTP…VKITHNEGLR (80 aa)) lie on the Mitochondrial matrix side of the membrane. [2Fe-2S] cluster is bound by residues Cys-72, Cys-76, Cys-86, and Cys-92. The chain crosses the membrane as a helical span at residues 120 to 140 (SLWSGLPPTLVMAVPATVIYF). Over 141 to 162 (TCYDQLRDFLCYSMGYHGDHIP) the chain is Mitochondrial intermembrane. The helical transmembrane segment at 163–183 (LIAGGLARLGAVSVISPLELV) threads the bilayer. Topologically, residues 184–212 (RTKMQSRRLQYSELMVCIRSSVAQDGWLS) are mitochondrial matrix. Residues 213-233 (LWRGWGPTVLRDVPFSALYWF) form a helical membrane-spanning segment. Residues 234–253 (NYELVKAQLCEHYRTPQASF) are Mitochondrial intermembrane-facing. Residues 254–274 (TISFTAGAVSGAIAAVLTLPF) traverse the membrane as a helical segment. Topologically, residues 275–316 (DVVKTRRQIQLGEMEALGAVSMKKPSSTWNMMRNIWIDMGYK) are mitochondrial matrix. A helical transmembrane segment spans residues 317-337 (GLFAGFLPRVIKVAPACAVMI). Topologically, residues 338 to 359 (STYEFGKTFFQERNLHQARCGL) are mitochondrial intermembrane.

It belongs to the mitochondrial carrier (TC 2.A.29) family. In terms of processing, cleaved and degraded by AFG3L2; degradation by AFG3L2 is regulated by the ability of SLC25A39 to bind iron-sulfur. In absence of mitochondrial glutathione, SLC25A39 binds iron-sulfur, preventing cleavage and degradation by AFG3L2. The presence of mitochondrial glutathione prevents iron-sulfur-binding to SLC25A39, promoting cleavage and degradation by AFG3L2.

The protein resides in the mitochondrion inner membrane. It carries out the reaction glutathione(in) = glutathione(out). The activity of SLC25A39 is regulated by levels of mitochondrial glutathione via its ability to bind [2Fe-2S] iron-sulfur cluster. Upon physiological levels of mitochondrial glutathione, glutathione prevents iron-sulfur-binding to SLC25A39 promoting cleavage and degradation by AFG3L2. Upon depletion of mitochondrial glutathione, SLC25A39 binds iron-sulfur, preventing cleavage and degradation by AFG3L2. Mitochondrial transporter required for glutathione import into mitochondria. Glutathione, which plays key roles in oxidative metabolism, is produced exclusively in the cytosol and is imported in many organelles. Mitochondrial glutathione is required for the activity and stability of proteins containing iron-sulfur clusters, as well as erythropoiesis. Involved in the early steps of heme biosynthesis. The polypeptide is Mitochondrial glutathione transporter SLC25A39 (slc25a39) (Danio rerio (Zebrafish)).